A 138-amino-acid polypeptide reads, in one-letter code: Acidic phospholipase A2 DsM-a2/DsM-a2' (138 aa).

A signal peptide spans 1–16 (MRTLWIVAVCLIGVEG). 7 disulfides stabilise this stretch: Cys42/Cys131, Cys44/Cys60, Cys59/Cys111, Cys65/Cys138, Cys66/Cys104, Cys73/Cys97, and Cys91/Cys102. The Ca(2+) site is built by Tyr43, Gly45, and Gly47. The active site involves His63. Asp64 is a Ca(2+) binding site. Asp105 is an active-site residue.

This sequence belongs to the phospholipase A2 family. Group II subfamily. D49 sub-subfamily. Ca(2+) serves as cofactor. Expressed by the venom gland.

It is found in the secreted. The enzyme catalyses a 1,2-diacyl-sn-glycero-3-phosphocholine + H2O = a 1-acyl-sn-glycero-3-phosphocholine + a fatty acid + H(+). Functionally, exhibits high hydrolytic activities and shows strong preference for the anionic micelles (dPPC with deoxycholate) to the zwitterionic micelles (dPPC with Triton X-100). PLA2 catalyzes the calcium-dependent hydrolysis of the 2-acyl groups in 3-sn-phosphoglycerides. The polypeptide is Acidic phospholipase A2 DsM-a2/DsM-a2' (Daboia siamensis (Eastern Russel's viper)).